Consider the following 92-residue polypeptide: Small ribosomal subunit protein uS15c (92 aa).

It belongs to the universal ribosomal protein uS15 family. Part of the 30S ribosomal subunit.

Its subcellular location is the plastid. The protein resides in the chloroplast. This chain is Small ribosomal subunit protein uS15c (rps15-A), found in Lemna minor (Common duckweed).